The following is a 585-amino-acid chain: Parathyroid hormone/parathyroid hormone-related peptide receptor (585 aa).

A signal peptide spans 1–26 (MGAPRISHSLALLLCCSVLSSVYALV). The Extracellular segment spans residues 27-185 (DADDVITKEE…REREVFDRLG (159 aa)). Intrachain disulfides connect cysteine 48–cysteine 114, cysteine 105–cysteine 145, and cysteine 128–cysteine 167. Residues 69–90 (MSRSAKTKKEKPAEKLYSQAEE) form a disordered region. 4 N-linked (GlcNAc...) asparagine glycosylation sites follow: asparagine 148, asparagine 158, asparagine 163, and asparagine 173. A helical membrane pass occupies residues 186 to 209 (MIYTVGYSISLGSLTVAVLILGYF). Residues 210-216 (RRLHCTR) lie on the Cytoplasmic side of the membrane. Residues 217–236 (NYIHMHLFVSFMLRAVSIFI) traverse the membrane as a helical segment. At 237 to 276 (KDAVLYSGVSTDEIERITEEELRAFTEPPPADKAGFVGCR) the chain is on the extracellular side. Residues 277-300 (VAVTVFLYFLTTNYYWILVEGLYL) traverse the membrane as a helical segment. Residues 301–314 (HSLIFMAFFSEKKY) are Cytoplasmic-facing. Residues 315–336 (LWGFTLFGWGLPAVFVAVWVTV) form a helical membrane-spanning segment. Residues 337–355 (RATLANTECWDLSSGNKKW) are Extracellular-facing. Residues 356-376 (IIQVPILAAIVVNFILFINII) form a helical membrane-spanning segment. Topologically, residues 377-403 (RVLATKLRETNAGRCDTRQQYRKLLKS) are cytoplasmic. Residues 404 to 422 (TLVLMPLFGVHYIVFMATP) form a helical membrane-spanning segment. The Extracellular segment spans residues 423–434 (YTEVSGILWQVQ). A helical transmembrane segment spans residues 435–457 (MHYEMLFNSFQGFFVAIIYCFCN). The Cytoplasmic portion of the chain corresponds to 458–585 (GEVQAEIKKS…LLEEERETVM (128 aa)). Positions 468–471 (WSRW) match the Important for interaction with G proteins motif. The segment at 531–585 (PGYVKHGSISENSLPSSGPEPGTKDDGYLNGSGLYEPMVGEQPPPLLEEERETVM) is disordered.

It belongs to the G-protein coupled receptor 2 family. As to quaternary structure, homodimer in the absence of bound ligand. Peptide hormone binding leads to dissociation of the homodimer. N-glycosylated.

Its subcellular location is the cell membrane. In terms of biological role, G-protein-coupled receptor for parathyroid hormone (PTH) and for parathyroid hormone-related peptide (PTHLH). Ligand binding causes a conformation change that triggers signaling via guanine nucleotide-binding proteins (G proteins) and modulates the activity of downstream effectors, such as adenylate cyclase (cAMP). PTH1R is coupled to G(s) G alpha proteins and mediates activation of adenylate cyclase activity. PTHLH dissociates from PTH1R more rapidly than PTH; as consequence, the cAMP response induced by PTHLH decays faster than the response induced by PTH. The sequence is that of Parathyroid hormone/parathyroid hormone-related peptide receptor (PTH1R) from Didelphis virginiana (North American opossum).